The following is a 269-amino-acid chain: Formamidopyrimidine-DNA glycosylase (269 aa).

Pro2 (schiff-base intermediate with DNA) is an active-site residue. Glu3 serves as the catalytic Proton donor. The active-site Proton donor; for beta-elimination activity is Lys57. Residues His90, Arg109, and Lys150 each contribute to the DNA site. Residues 235–269 form an FPG-type zinc finger; it reads QVYGRKGEPCRICGMPVVGTKHAQRATFYCRQCQK. Arg259 (proton donor; for delta-elimination activity) is an active-site residue.

It belongs to the FPG family. As to quaternary structure, monomer. Zn(2+) is required as a cofactor.

It carries out the reaction Hydrolysis of DNA containing ring-opened 7-methylguanine residues, releasing 2,6-diamino-4-hydroxy-5-(N-methyl)formamidopyrimidine.. The enzyme catalyses 2'-deoxyribonucleotide-(2'-deoxyribose 5'-phosphate)-2'-deoxyribonucleotide-DNA = a 3'-end 2'-deoxyribonucleotide-(2,3-dehydro-2,3-deoxyribose 5'-phosphate)-DNA + a 5'-end 5'-phospho-2'-deoxyribonucleoside-DNA + H(+). Involved in base excision repair of DNA damaged by oxidation or by mutagenic agents. Acts as a DNA glycosylase that recognizes and removes damaged bases. Has a preference for oxidized purines, such as 7,8-dihydro-8-oxoguanine (8-oxoG). Has AP (apurinic/apyrimidinic) lyase activity and introduces nicks in the DNA strand. Cleaves the DNA backbone by beta-delta elimination to generate a single-strand break at the site of the removed base with both 3'- and 5'-phosphates. The sequence is that of Formamidopyrimidine-DNA glycosylase from Klebsiella pneumoniae subsp. pneumoniae (strain ATCC 700721 / MGH 78578).